We begin with the raw amino-acid sequence, 602 residues long: Chaperone protein dnaK (602 aa).

This sequence belongs to the heat shock protein 70 family.

The protein resides in the plastid. The protein localises to the chloroplast. Functionally, acts as a chaperone. This Thalassiosira pseudonana (Marine diatom) protein is Chaperone protein dnaK.